The following is a 380-amino-acid chain: Erythronate-4-phosphate dehydrogenase (380 aa).

Residues S45 and T66 each coordinate substrate. Cysteines 65 and 90 form a disulfide. NAD(+) is bound by residues 126-127 (QV), D146, T175, 206-208 (ASR), and D232. Residue R208 is part of the active site. E237 is a catalytic residue. H254 serves as the catalytic Proton donor. G257 provides a ligand contact to NAD(+). Position 258 (Y258) interacts with substrate.

This sequence belongs to the D-isomer specific 2-hydroxyacid dehydrogenase family. PdxB subfamily. In terms of assembly, homodimer.

The protein localises to the cytoplasm. It catalyses the reaction 4-phospho-D-erythronate + NAD(+) = (R)-3-hydroxy-2-oxo-4-phosphooxybutanoate + NADH + H(+). It functions in the pathway cofactor biosynthesis; pyridoxine 5'-phosphate biosynthesis; pyridoxine 5'-phosphate from D-erythrose 4-phosphate: step 2/5. Functionally, catalyzes the oxidation of erythronate-4-phosphate to 3-hydroxy-2-oxo-4-phosphonooxybutanoate. The polypeptide is Erythronate-4-phosphate dehydrogenase (Pseudomonas aeruginosa (strain ATCC 15692 / DSM 22644 / CIP 104116 / JCM 14847 / LMG 12228 / 1C / PRS 101 / PAO1)).